The chain runs to 274 residues: Undecaprenyl-diphosphatase (274 aa).

The next 7 membrane-spanning stretches (helical) occupy residues 4 to 24, 41 to 61, 83 to 103, 108 to 128, 184 to 204, 218 to 238, and 246 to 266; these read PLFV…FLPI, DATS…AVCW, FVGL…MFHS, LLFN…LILW, AAEF…VYDL, VFAI…KAFI, and FIAF…TWQL.

The protein belongs to the UppP family.

Its subcellular location is the cell inner membrane. It carries out the reaction di-trans,octa-cis-undecaprenyl diphosphate + H2O = di-trans,octa-cis-undecaprenyl phosphate + phosphate + H(+). In terms of biological role, catalyzes the dephosphorylation of undecaprenyl diphosphate (UPP). Confers resistance to bacitracin. The protein is Undecaprenyl-diphosphatase of Aromatoleum aromaticum (strain DSM 19018 / LMG 30748 / EbN1) (Azoarcus sp. (strain EbN1)).